Here is a 1159-residue protein sequence, read N- to C-terminus: DNA-directed RNA polymerase subunit beta' (1159 aa).

3 residues coordinate Mg(2+): aspartate 398, aspartate 400, and aspartate 402. Zn(2+)-binding residues include cysteine 741, cysteine 815, cysteine 822, and cysteine 825.

This sequence belongs to the RNA polymerase beta' chain family. As to quaternary structure, the RNAP catalytic core consists of 2 alpha, 1 beta, 1 beta' and 1 omega subunit. When a sigma factor is associated with the core the holoenzyme is formed, which can initiate transcription. It depends on Mg(2+) as a cofactor. Requires Zn(2+) as cofactor.

It catalyses the reaction RNA(n) + a ribonucleoside 5'-triphosphate = RNA(n+1) + diphosphate. In terms of biological role, DNA-dependent RNA polymerase catalyzes the transcription of DNA into RNA using the four ribonucleoside triphosphates as substrates. The sequence is that of DNA-directed RNA polymerase subunit beta' from Porphyromonas cangingivalis.